The sequence spans 116 residues: Aca2 repressor (116 aa).

Tyr34 is a DNA binding site. His92 is a binding site for Mg(2+).

As to quaternary structure, homodimer.

Its function is as follows. Represses the expression of the acrIF8-aca2 operon. Regulates the transcription and translation of phage anti-CRISPR acrIF8 gene (AC H9C181), which is necessary because the expression of this gene rises rapidely upon infection to enable evasion from host CRISPR-Cas defense but is probably toxic to the host cell. Aca2 repressor can inhibit acrIF8 transcriptionally through DNA binding to 2 inverted repeats in the promoter region and translationally by binding conserved RNA stem-loops on mRNAs thereby blocking ribosome access. Both modes of regulation together are essential for complete tight repression. The protein is Aca2 repressor of Pectobacterium carotovorum (Erwinia carotovora).